A 568-amino-acid chain; its full sequence is Potassium-transporting ATPase potassium-binding subunit (568 aa).

11 helical membrane-spanning segments follow: residues 6-26 (ILQILAFTAIIWALAKPIGGF), 64-84 (TGYAGSLLAFSLVSLLFTYLI), 135-155 (IALATHNFFSAAAGIAVAIAF), 179-199 (LYILLPMSLLAALFFCSQGVI), 254-274 (LANLAQMVLIFLIPAGLTYTF), 285-305 (WALLAAMTVLFLAGVCVVYPA), 382-402 (GLYGMLLFAILAVFIAGLMVG), 419-439 (MVMLSVLVLALCILGFSAAGI), 459-481 (VLYGYTSAAGNNGSAFAGLSANT), 488-508 (LGIAMLCGRFLMLIPLLAAAG), and 529-549 (LFVTLLVGVVVIVGALTFFPA).

This sequence belongs to the KdpA family. In terms of assembly, the system is composed of three essential subunits: KdpA, KdpB and KdpC.

It localises to the cell inner membrane. Functionally, part of the high-affinity ATP-driven potassium transport (or Kdp) system, which catalyzes the hydrolysis of ATP coupled with the electrogenic transport of potassium into the cytoplasm. This subunit binds the periplasmic potassium ions and delivers the ions to the membrane domain of KdpB through an intramembrane tunnel. The sequence is that of Potassium-transporting ATPase potassium-binding subunit from Solibacter usitatus (strain Ellin6076).